We begin with the raw amino-acid sequence, 294 residues long: Homoserine kinase (294 aa).

83–93 provides a ligand contact to ATP; that stretch reads RPKSGLGSSGA.

Belongs to the GHMP kinase family. Homoserine kinase subfamily.

The protein resides in the cytoplasm. It carries out the reaction L-homoserine + ATP = O-phospho-L-homoserine + ADP + H(+). It participates in amino-acid biosynthesis; L-threonine biosynthesis; L-threonine from L-aspartate: step 4/5. Its function is as follows. Catalyzes the ATP-dependent phosphorylation of L-homoserine to L-homoserine phosphate. The protein is Homoserine kinase of Pyrococcus abyssi (strain GE5 / Orsay).